Reading from the N-terminus, the 257-residue chain is Thiazole synthase (257 aa).

K96 functions as the Schiff-base intermediate with DXP in the catalytic mechanism. Residues G157, 184-185, and 206-207 contribute to the 1-deoxy-D-xylulose 5-phosphate site; these read AG and NT.

This sequence belongs to the ThiG family. Homotetramer. Forms heterodimers with either ThiH or ThiS.

The protein resides in the cytoplasm. The catalysed reaction is [ThiS sulfur-carrier protein]-C-terminal-Gly-aminoethanethioate + 2-iminoacetate + 1-deoxy-D-xylulose 5-phosphate = [ThiS sulfur-carrier protein]-C-terminal Gly-Gly + 2-[(2R,5Z)-2-carboxy-4-methylthiazol-5(2H)-ylidene]ethyl phosphate + 2 H2O + H(+). Its pathway is cofactor biosynthesis; thiamine diphosphate biosynthesis. In terms of biological role, catalyzes the rearrangement of 1-deoxy-D-xylulose 5-phosphate (DXP) to produce the thiazole phosphate moiety of thiamine. Sulfur is provided by the thiocarboxylate moiety of the carrier protein ThiS. In vitro, sulfur can be provided by H(2)S. The chain is Thiazole synthase from Bartonella bacilliformis (strain ATCC 35685 / KC583 / Herrer 020/F12,63).